Consider the following 578-residue polypeptide: Vacuolar protein 8 (578 aa).

The N-myristoyl glycine moiety is linked to residue Gly-2. 3 S-palmitoyl cysteine lipidation sites follow: Cys-4, Cys-5, and Cys-7. Phosphoserine occurs at positions 11 and 16. ARM repeat units lie at residues 37–75 (DKDQLDFYSGGPLKALTTLVYSDNLNLQRSAALAFAEIT), 76–114 (EKYVRQVSREVLEPILILLQSQDPQIQVAACAALGNLAV), 116–155 (NENKLLIVEMGGLEPLINQMMGDNVEVQCNAVGCITNLAT), 157–196 (DDNKHKIATSGALIPLTKLAKSKHIRVQRNATGALLNMTH), 198–237 (EENRKELVNAGAVPVLVSLLSSTDPDVQYYCTTALSNIAV), 239–280 (EANR…NLAS), 282–321 (TSYQLEIVRAGGLPHLVKLIQSDSIPLVLASVACIRNISI), 323–363 (PLNE…NLAA), and 407–446 (DVSKLDLLEANILDALIPMTFSQNQEVSGNAAAALANLCS). Lys-77 participates in a covalent cross-link: Glycyl lysine isopeptide (Lys-Gly) (interchain with G-Cter in ubiquitin). Lys-515 is covalently cross-linked (Glycyl lysine isopeptide (Lys-Gly) (interchain with G-Cter in ubiquitin)). A disordered region spans residues 527–557 (SGIDVKNPGSNNNPSSNDNNSNNNDTGSEHQ). Over residues 533 to 552 (NPGSNNNPSSNDNNSNNNDT) the composition is skewed to low complexity.

This sequence belongs to the beta-catenin family. As to quaternary structure, interacts with NVJ1. Forms heterotetramers of two VAC8 and two NVJ1 or two VAC8 and two ATG13. Palmitoylated on one or more of its N-terminal cysteine residues by PFA3, which is required for vacuole fusion.

The protein localises to the vacuole membrane. Functions in both vacuole inheritance and protein targeting from the cytoplasm to vacuole (cvt). Involved in the formation of nucleus-vacuole junctions (NVJs) during piecemeal microautophagy of the nucleus (PMN). NVJs are interorganelle interfaces mediated by NVJ1 in the nuclear envelope and VAC8 on the vacuole membrane. Together, NVJ1 and VAC8 form Velcro-like patches through which teardrop-like portions of the nucleus are pinched off into the vacuolar lumen and degraded by the PMN process. In Saccharomyces cerevisiae (strain ATCC 204508 / S288c) (Baker's yeast), this protein is Vacuolar protein 8 (VAC8).